The primary structure comprises 92 residues: CRISPR-associated endoribonuclease Cas2 (92 aa).

Position 9 (D9) interacts with Mg(2+).

It belongs to the CRISPR-associated endoribonuclease Cas2 protein family. Homodimer, forms a heterotetramer with a Cas1 homodimer. It depends on Mg(2+) as a cofactor.

CRISPR (clustered regularly interspaced short palindromic repeat), is an adaptive immune system that provides protection against mobile genetic elements (viruses, transposable elements and conjugative plasmids). CRISPR clusters contain sequences complementary to antecedent mobile elements and target invading nucleic acids. CRISPR clusters are transcribed and processed into CRISPR RNA (crRNA). Functions as a ssRNA-specific endoribonuclease. Involved in the integration of spacer DNA into the CRISPR cassette. In Aeropyrum pernix (strain ATCC 700893 / DSM 11879 / JCM 9820 / NBRC 100138 / K1), this protein is CRISPR-associated endoribonuclease Cas2.